A 400-amino-acid chain; its full sequence is Outer membrane protein alpha (400 aa).

The signal sequence occupies residues 1-20; sequence MKRVLLTVAMLSVFFSAMFA. Positions 21–81 constitute an SLH domain; it reads FFPDVPKDHW…DFIEQKMLAG (61 aa). Residues 85-379 are a coiled coil; it reads DLAQVVGNLS…ESVKAYNRNL (295 aa). Repeat copies occupy residues 208–232, 251–275, and 326–350. Positions 208–350 are 3 X 25 AA approximate repeat; sequence VNLHEKDIIN…SSLEEDLNMK (143 aa). Residues 380-400 traverse the membrane as a helical segment; that stretch reads SILTGAFFGILGLILIAISGK.

Homotetramer.

The protein localises to the cell outer membrane. Functionally, links the outer membrane to the inner membrane. Long fibrous protein that could serve to separate the two membranes. This Thermotoga maritima (strain ATCC 43589 / DSM 3109 / JCM 10099 / NBRC 100826 / MSB8) protein is Outer membrane protein alpha (omp-alpha).